The sequence spans 186 residues: Ribosome-recycling factor (186 aa).

This sequence belongs to the RRF family.

It localises to the cytoplasm. Functionally, responsible for the release of ribosomes from messenger RNA at the termination of protein biosynthesis. May increase the efficiency of translation by recycling ribosomes from one round of translation to another. The protein is Ribosome-recycling factor of Herminiimonas arsenicoxydans.